We begin with the raw amino-acid sequence, 775 residues long: 5-methyltetrahydropteroyltriglutamate--homocysteine methyltransferase (775 aa).

5-methyltetrahydropteroyltri-L-glutamate-binding positions include 16–19 and K115; that span reads REMK. L-homocysteine contacts are provided by residues 435 to 437 and E488; that span reads IGS. L-methionine contacts are provided by residues 435 to 437 and E488; that span reads IGS. 5-methyltetrahydropteroyltri-L-glutamate is bound by residues 519 to 520 and W565; that span reads RC. Residue D603 coordinates L-homocysteine. D603 is an L-methionine binding site. Position 609 (E609) interacts with 5-methyltetrahydropteroyltri-L-glutamate. Zn(2+)-binding residues include H645, C647, and E669. The active-site Proton donor is H698. Residue C730 participates in Zn(2+) binding.

It belongs to the vitamin-B12 independent methionine synthase family. Requires Zn(2+) as cofactor.

It carries out the reaction 5-methyltetrahydropteroyltri-L-glutamate + L-homocysteine = tetrahydropteroyltri-L-glutamate + L-methionine. It functions in the pathway amino-acid biosynthesis; L-methionine biosynthesis via de novo pathway; L-methionine from L-homocysteine (MetE route): step 1/1. Functionally, catalyzes the transfer of a methyl group from 5-methyltetrahydrofolate to homocysteine resulting in methionine formation. This is 5-methyltetrahydropteroyltriglutamate--homocysteine methyltransferase from Coxiella burnetii (strain Dugway 5J108-111).